The following is a 307-amino-acid chain: Aspartate carbamoyltransferase catalytic subunit (307 aa).

Carbamoyl phosphate is bound by residues arginine 59 and threonine 60. Lysine 87 serves as a coordination point for L-aspartate. Carbamoyl phosphate contacts are provided by arginine 109, histidine 137, and glutamine 140. The L-aspartate site is built by arginine 170 and arginine 224. Residues glycine 265 and proline 266 each coordinate carbamoyl phosphate.

Belongs to the aspartate/ornithine carbamoyltransferase superfamily. ATCase family. As to quaternary structure, heterododecamer (2C3:3R2) of six catalytic PyrB chains organized as two trimers (C3), and six regulatory PyrI chains organized as three dimers (R2).

It carries out the reaction carbamoyl phosphate + L-aspartate = N-carbamoyl-L-aspartate + phosphate + H(+). Its pathway is pyrimidine metabolism; UMP biosynthesis via de novo pathway; (S)-dihydroorotate from bicarbonate: step 2/3. Functionally, catalyzes the condensation of carbamoyl phosphate and aspartate to form carbamoyl aspartate and inorganic phosphate, the committed step in the de novo pyrimidine nucleotide biosynthesis pathway. The chain is Aspartate carbamoyltransferase catalytic subunit from Cytophaga hutchinsonii (strain ATCC 33406 / DSM 1761 / CIP 103989 / NBRC 15051 / NCIMB 9469 / D465).